The primary structure comprises 208 residues: FMN-dependent NADH:quinone oxidoreductase 2 (208 aa).

Belongs to the azoreductase type 1 family. In terms of assembly, homodimer. The cofactor is FMN.

The catalysed reaction is 2 a quinone + NADH + H(+) = 2 a 1,4-benzosemiquinone + NAD(+). It catalyses the reaction N,N-dimethyl-1,4-phenylenediamine + anthranilate + 2 NAD(+) = 2-(4-dimethylaminophenyl)diazenylbenzoate + 2 NADH + 2 H(+). Its function is as follows. Quinone reductase that provides resistance to thiol-specific stress caused by electrophilic quinones. Functionally, also exhibits azoreductase activity. Catalyzes the reductive cleavage of the azo bond in aromatic azo compounds to the corresponding amines. This chain is FMN-dependent NADH:quinone oxidoreductase 2, found in Bacillus cereus (strain ATCC 10987 / NRS 248).